The chain runs to 100 residues: NADH-quinone oxidoreductase subunit K (100 aa).

The next 3 membrane-spanning stretches (helical) occupy residues Leu-4–Ile-24, Leu-29–Val-49, and Val-60–Leu-80.

Belongs to the complex I subunit 4L family. NDH-1 is composed of 13 different subunits. Subunits NuoA, H, J, K, L, M, N constitute the membrane sector of the complex.

The protein localises to the cell inner membrane. The catalysed reaction is a quinone + NADH + 5 H(+)(in) = a quinol + NAD(+) + 4 H(+)(out). In terms of biological role, NDH-1 shuttles electrons from NADH, via FMN and iron-sulfur (Fe-S) centers, to quinones in the respiratory chain. The immediate electron acceptor for the enzyme in this species is believed to be ubiquinone. Couples the redox reaction to proton translocation (for every two electrons transferred, four hydrogen ions are translocated across the cytoplasmic membrane), and thus conserves the redox energy in a proton gradient. This chain is NADH-quinone oxidoreductase subunit K, found in Photorhabdus laumondii subsp. laumondii (strain DSM 15139 / CIP 105565 / TT01) (Photorhabdus luminescens subsp. laumondii).